Here is a 454-residue protein sequence, read N- to C-terminus: Maintenance of mitochondrial morphology protein 1 (454 aa).

Residues 1–128 are Lumenal-facing; sequence MSMVIGIGDL…QSSGWGFAHG (128 aa). The chain crosses the membrane as a helical span at residues 129–149; sequence LLVGQLSVVAVLAFFIKFFIF. Over 150-454 the chain is Cytoplasmic; sequence GNSSMARPLM…SESETAVDSN (305 aa). Residues 207–430 enclose the SMP-LTD domain; the sequence is QSESLDWFNV…EPRFQLIELP (224 aa).

The protein belongs to the MMM1 family. Homodimer. Component of the ER-mitochondria encounter structure (ERMES) or MDM complex, composed of MMM1, MDM10, MDM12 and MDM34. An MMM1 homodimer associates with one molecule of MDM12 on each side in a pairwise head-to-tail manner, and the SMP-LTD domains of MMM1 and MDM12 generate a continuous hydrophobic tunnel for phospholipid trafficking.

Its subcellular location is the endoplasmic reticulum membrane. In terms of biological role, component of the ERMES/MDM complex, which serves as a molecular tether to connect the endoplasmic reticulum (ER) and mitochondria. Components of this complex are involved in the control of mitochondrial shape and protein biogenesis, and function in nonvesicular lipid trafficking between the ER and mitochondria. The MDM12-MMM1 subcomplex functions in the major beta-barrel assembly pathway that is responsible for biogenesis of all outer membrane beta-barrel proteins, and acts in a late step after the SAM complex. The MDM10-MDM12-MMM1 subcomplex further acts in the TOM40-specific pathway after the action of the MDM12-MMM1 complex. Essential for establishing and maintaining the structure of mitochondria and maintenance of mtDNA nucleoids. This is Maintenance of mitochondrial morphology protein 1 from Komagataella phaffii (strain GS115 / ATCC 20864) (Yeast).